Consider the following 214-residue polypeptide: Thymidylate kinase (214 aa).

10–17 (GPDGAGKT) serves as a coordination point for ATP.

This sequence belongs to the thymidylate kinase family.

The catalysed reaction is dTMP + ATP = dTDP + ADP. Its function is as follows. Phosphorylation of dTMP to form dTDP in both de novo and salvage pathways of dTTP synthesis. This is Thymidylate kinase from Limosilactobacillus fermentum (strain NBRC 3956 / LMG 18251) (Lactobacillus fermentum).